A 254-amino-acid polypeptide reads, in one-letter code: Thiazole synthase (254 aa).

Catalysis depends on lysine 96, which acts as the Schiff-base intermediate with DXP. Residues glycine 157, 183–184 (AG), and 205–206 (NT) each bind 1-deoxy-D-xylulose 5-phosphate.

It belongs to the ThiG family. Homotetramer. Forms heterodimers with either ThiH or ThiS.

The protein localises to the cytoplasm. The enzyme catalyses [ThiS sulfur-carrier protein]-C-terminal-Gly-aminoethanethioate + 2-iminoacetate + 1-deoxy-D-xylulose 5-phosphate = [ThiS sulfur-carrier protein]-C-terminal Gly-Gly + 2-[(2R,5Z)-2-carboxy-4-methylthiazol-5(2H)-ylidene]ethyl phosphate + 2 H2O + H(+). Its pathway is cofactor biosynthesis; thiamine diphosphate biosynthesis. Catalyzes the rearrangement of 1-deoxy-D-xylulose 5-phosphate (DXP) to produce the thiazole phosphate moiety of thiamine. Sulfur is provided by the thiocarboxylate moiety of the carrier protein ThiS. In vitro, sulfur can be provided by H(2)S. In Clostridium kluyveri (strain ATCC 8527 / DSM 555 / NBRC 12016 / NCIMB 10680 / K1), this protein is Thiazole synthase.